Here is a 375-residue protein sequence, read N- to C-terminus: Beta-1,3-N-acetylglucosaminyltransferase lunatic fringe (375 aa).

The Cytoplasmic segment spans residues 1–8; it reads MLKNWGKK. The helical; Signal-anchor for type II membrane protein transmembrane segment at 9–29 threads the bilayer; that stretch reads LLLSIVGATLTCLLVLVVDQQ. Topologically, residues 30 to 375 are lumenal; the sequence is SRHMLETQSD…TPWCPWKAAY (346 aa). Positions 53–73 are disordered; sequence DLDPANPGDGGDPANSAQDSG. Residue Arg-125 participates in substrate binding. Asn-163 carries N-linked (GlcNAc...) asparagine glycosylation. Cystine bridges form between Cys-164-Cys-175 and Cys-193-Cys-256. Position 197 (Asp-197) interacts with substrate. Mn(2+) is bound at residue Asp-198. Asp-286 is an active-site residue. Position 310 (His-310) interacts with Mn(2+). A disulfide bridge links Cys-360 with Cys-369.

This sequence belongs to the glycosyltransferase 31 family. Requires Mn(2+) as cofactor. The cofactor is Co(2+). Post-translationally, a soluble form may be derived from the membrane form by proteolytic processing. Detected in the neural tube, the eye and the otic vesicle, expression coincides with the region that produces the medial, intermediate and lateral neurons.

Its subcellular location is the golgi apparatus membrane. The enzyme catalyses 3-O-(alpha-L-fucosyl)-L-threonyl-[EGF-like domain protein] + UDP-N-acetyl-alpha-D-glucosamine = 3-O-(N-acetyl-beta-D-glucosaminyl-(1-&gt;3)-alpha-L-fucosyl)-L-threonyl-[EGF-like domain protein] + UDP + H(+). The catalysed reaction is 3-O-(alpha-L-fucosyl)-L-seryl-[EGF-like domain protein] + UDP-N-acetyl-alpha-D-glucosamine = 3-O-(N-acetyl-beta-D-glucosaminyl-(1-&gt;3)-alpha-L-fucosyl)-L-seryl-[EGF-like domain protein] + UDP + H(+). Functionally, glycosyltransferase that initiates the elongation of O-linked fucose residues attached to EGF-like repeats in the extracellular domain of Notch molecules. Essential mediator of somite segmentation and patterning. May be involved in mesoderm development. This chain is Beta-1,3-N-acetylglucosaminyltransferase lunatic fringe (lfng), found in Xenopus laevis (African clawed frog).